Reading from the N-terminus, the 425-residue chain is Gamma-glutamyl phosphate reductase (425 aa).

The protein belongs to the gamma-glutamyl phosphate reductase family.

The protein localises to the cytoplasm. It carries out the reaction L-glutamate 5-semialdehyde + phosphate + NADP(+) = L-glutamyl 5-phosphate + NADPH + H(+). Its pathway is amino-acid biosynthesis; L-proline biosynthesis; L-glutamate 5-semialdehyde from L-glutamate: step 2/2. Its function is as follows. Catalyzes the NADPH-dependent reduction of L-glutamate 5-phosphate into L-glutamate 5-semialdehyde and phosphate. The product spontaneously undergoes cyclization to form 1-pyrroline-5-carboxylate. The chain is Gamma-glutamyl phosphate reductase from Symbiobacterium thermophilum (strain DSM 24528 / JCM 14929 / IAM 14863 / T).